Reading from the N-terminus, the 42-residue chain is Iota-conotoxin-like R11.15 (42 aa).

Disulfide bonds link cysteine 5–cysteine 19, cysteine 12–cysteine 22, cysteine 18–cysteine 27, and cysteine 21–cysteine 36.

The protein belongs to the conotoxin I1 superfamily. Expressed by the venom duct.

It localises to the secreted. Its function is as follows. Iota-conotoxins bind to voltage-gated sodium channels (Nav) and act as agonists by shifting the voltage-dependence of activation to more hyperpolarized levels. Produces general excitatory symptoms. This is Iota-conotoxin-like R11.15 from Conus radiatus (Rayed cone).